The sequence spans 128 residues: uncharacterized protein (128 aa).

3 helical membrane-spanning segments follow: residues Ile-30–Ser-50, Val-65–Gln-85, and Trp-93–Val-113.

The protein localises to the cell membrane. This is an uncharacterized protein from Rickettsia prowazekii (strain Madrid E).